We begin with the raw amino-acid sequence, 238 residues long: Cysteine-rich venom protein (238 aa).

The first 19 residues, 1–19 (MIAFIVLLSLAAVLQQSSG), serve as a signal peptide directing secretion. One can recognise an SCP domain in the interval 38-164 (VDKHNALRRS…STKYLYVCQY (127 aa)). Cystine bridges form between Cys-75–Cys-153, Cys-92–Cys-165, Cys-148–Cys-162, Cys-184–Cys-191, Cys-187–Cys-196, Cys-200–Cys-233, Cys-209–Cys-227, and Cys-218–Cys-231. A ShKT domain is found at 200 to 233 (CKYEDAFTNCKALAKKTKCKTEWIKSKCPATCFC).

It belongs to the CRISP family. Expressed by the venom gland.

It localises to the secreted. In terms of biological role, blocks contraction of smooth muscle elicited by high potassium-induced depolarization, but does not block caffeine-stimulated contraction. May target voltage-gated calcium channels on smooth muscle. The polypeptide is Cysteine-rich venom protein (Austrelaps superbus (Lowland copperhead snake)).